The chain runs to 101 residues: NADH-quinone oxidoreductase subunit K (101 aa).

3 consecutive transmembrane segments (helical) span residues 4-24 (LAHF…GIFL), 30-50 (IVLL…FVAF), and 61-81 (VFVF…LAIL).

This sequence belongs to the complex I subunit 4L family. NDH-1 is composed of 14 different subunits. Subunits NuoA, H, J, K, L, M, N constitute the membrane sector of the complex.

The protein localises to the cell inner membrane. It catalyses the reaction a quinone + NADH + 5 H(+)(in) = a quinol + NAD(+) + 4 H(+)(out). Functionally, NDH-1 shuttles electrons from NADH, via FMN and iron-sulfur (Fe-S) centers, to quinones in the respiratory chain. The immediate electron acceptor for the enzyme in this species is believed to be ubiquinone. Couples the redox reaction to proton translocation (for every two electrons transferred, four hydrogen ions are translocated across the cytoplasmic membrane), and thus conserves the redox energy in a proton gradient. The sequence is that of NADH-quinone oxidoreductase subunit K from Cupriavidus necator (strain ATCC 17699 / DSM 428 / KCTC 22496 / NCIMB 10442 / H16 / Stanier 337) (Ralstonia eutropha).